The primary structure comprises 175 residues: NADH-ubiquinone oxidoreductase chain 6 (175 aa).

The next 5 membrane-spanning stretches (helical) occupy residues Met-1–Ser-21, Ser-25–Leu-45, Phe-47–Val-67, Ala-88–Leu-108, and Tyr-149–Met-169.

The protein belongs to the complex I subunit 6 family. Core subunit of respiratory chain NADH dehydrogenase (Complex I) which is composed of 45 different subunits.

It localises to the mitochondrion inner membrane. It catalyses the reaction a ubiquinone + NADH + 5 H(+)(in) = a ubiquinol + NAD(+) + 4 H(+)(out). Functionally, core subunit of the mitochondrial membrane respiratory chain NADH dehydrogenase (Complex I) which catalyzes electron transfer from NADH through the respiratory chain, using ubiquinone as an electron acceptor. Essential for the catalytic activity and assembly of complex I. This chain is NADH-ubiquinone oxidoreductase chain 6 (MT-ND6), found in Bos mutus grunniens (Wild yak).